We begin with the raw amino-acid sequence, 235 residues long: Flagellar L-ring protein (235 aa).

An N-terminal signal peptide occupies residues 1 to 18 (MNKIAGTLFLLAGLAMAG). C19 carries the N-palmitoyl cysteine lipid modification. The S-diacylglycerol cysteine moiety is linked to residue C19.

Belongs to the FlgH family. As to quaternary structure, the basal body constitutes a major portion of the flagellar organelle and consists of four rings (L,P,S, and M) mounted on a central rod.

The protein localises to the cell outer membrane. It localises to the bacterial flagellum basal body. In terms of biological role, assembles around the rod to form the L-ring and probably protects the motor/basal body from shearing forces during rotation. In Chelativorans sp. (strain BNC1), this protein is Flagellar L-ring protein.